We begin with the raw amino-acid sequence, 60 residues long: RICYNHQSTTPATTKSCGENSCYKKTWSDHRGTIIERGCGCPKVKRGVHLHCCQSDKCNN.

4 disulfides stabilise this stretch: cysteine 3/cysteine 22, cysteine 17/cysteine 39, cysteine 41/cysteine 52, and cysteine 53/cysteine 58.

Belongs to the three-finger toxin family. Short-chain subfamily. Type I alpha-neurotoxin sub-subfamily. As to expression, expressed by the venom gland.

Its subcellular location is the secreted. Its function is as follows. Binds to muscle nicotinic acetylcholine receptor (nAChR) and inhibit acetylcholine from binding to the receptor, thereby impairing neuromuscular transmission. The chain is Short neurotoxin 1 from Dendroaspis viridis (Western green mamba).